Here is a 310-residue protein sequence, read N- to C-terminus: MNSIFTEENLLAFTTAARFGSFSKAAEELGLTTSAISYTIKRMETGLDVVLFTRSTRSIELTESGRYFFRKATDLLNDFYAIKRRIDTISQGIEARVRICINQLLYTPKHTARLLQVLKKQFPTCQITVTTEVYNGVWDAIINNQANIAIGAPDTLLDGGGIDYTEIGAIRWAFAIAPDHPLAFVPEPIAESQLRLYPNIMVEDTAHTINKKVGWLLHGQESILVPDFNTKCQCQILGEGIGFLPDYMVREAMTQSLLVTRQIHNPRQDSRMLLATQHSATGQVTQWIKKQFAPNGILTGIYQDLLHREN.

Residues 5–62 form the HTH lysR-type domain; sequence FTEENLLAFTTAARFGSFSKAAEELGLTTSAISYTIKRMETGLDVVLFTRSTRSIELT. The segment at residues 22-42 is a DNA-binding region (H-T-H motif); it reads FSKAAEELGLTTSAISYTIKR.

This sequence belongs to the LysR transcriptional regulatory family.

This is an uncharacterized protein from Escherichia coli (strain K12).